We begin with the raw amino-acid sequence, 442 residues long: Citrate transporter CitP (442 aa).

13 consecutive transmembrane segments (helical) span residues 27–47 (ISGIGLIAYAFMAVLLIIAIS), 59–79 (IFALVLMGHVFYYLGAHLPIF), 83–103 (LGGGSVFTILLTAILVATNVI), 114–134 (FINGMDFLGLYIVSLIASSLF), 151–171 (VAFISMALTAVVIGIVGVIIG), 177–197 (AILYIAMPIMAGGVGAGIVPL), 209–229 (SAGILSKLFPTVILGNLLAII), 267–287 (YVQLGVGLIIAVMFFMIGTML), 293–313 (GINAYAFIILSIVLTKAFGLL), 321–341 (VIMFGQVIVKNMTHALLAGVG), 349–369 (VLLAALSWQFVVLCLVSIVAI), 387–409 (AAITAGLANNSMGGTGNVAVLAA), and 421–441 (MGNRIGGALILVVAGILVTFM).

The protein belongs to the 2-hydroxycarboxylate transporter (2-HCT) (TC 2.A.24) family.

Its subcellular location is the cell membrane. It carries out the reaction (R)-lactate(in) + citrate(out) = (R)-lactate(out) + citrate(in). It catalyses the reaction (S)-lactate(in) + citrate(out) = (S)-lactate(out) + citrate(in). The enzyme catalyses citrate(in) + H(+)(in) = citrate(out) + H(+)(out). With respect to regulation, the transport of citrate is unaffected by the presence of citrate in the growth media. In terms of biological role, secondary transporter involved in citrate metabolism. During cometabolism of citrate and glucose, catalyzes the uptake of divalent citrate into the cell coupled to the exit of monovalent lactate, the end product of glycolysis in L.lactis. The citrate/lactate exchange is electrogenic and results in the generation of a membrane potential. Plays an important role in resistance against lactate toxicity at low pH. In the absence of glucose, i.e. when no lactate is produced, CitP catalyzes the uptake of citrate in exchange with the citrate metabolism intermediates pyruvate and alpha-acetolactate, and the end product acetate. In the absence of glucose, CitP can also catalyze the proton-dependent transport of citrate. In vitro, shows a broad substrate specificity. Can transport a wide variety of mono- and dicarboxylates of the form X-CR(2)-COO(-), where X represents OH (2-hydroxy acid), O (2-keto acid), or H (acid) and R groups differ in size, hydrophobicity and composition. Many of the substrates are intermediates or products of amino acid metabolism, suggesting that CitP may have a broader physiological function than its role in citrate metabolism. This Lactococcus lactis subsp. lactis (Streptococcus lactis) protein is Citrate transporter CitP.